The sequence spans 81 residues: Conotoxin Vc6.13 (81 aa).

The signal sequence occupies residues 1 to 19 (MEKLTILLLVAAVLMSIQA). The propeptide occupies 20-44 (LNQEQHQRAKINLLSKRKAPAERWW). Cystine bridges form between Cys-49–Cys-63, Cys-56–Cys-67, and Cys-62–Cys-72.

Belongs to the conotoxin O2 superfamily. In terms of tissue distribution, expressed by the venom duct.

It is found in the secreted. Inhibits voltage-gated ion channels. This is Conotoxin Vc6.13 from Conus victoriae (Queen Victoria cone).